Reading from the N-terminus, the 486-residue chain is PTS system N-acetylmuramic acid-specific EIIBC component (486 aa).

Residues 1 to 89 (MAKITQTMIS…NKLIESVING (89 aa)) enclose the PTS EIIB type-1 domain. C28 acts as the Phosphocysteine intermediate; for EIIB activity in catalysis. The PTS EIIC type-1 domain maps to 127–486 (SKFATIFTPL…FFGSKDVDLS (360 aa)). 10 consecutive transmembrane segments (helical) span residues 129–149 (FATI…LLGF), 170–190 (LIAY…ILIG), 196–216 (AFGG…LGYN), 230–250 (FFGY…AAII), 268–288 (MILT…VVIM), 312–332 (AAIL…QGFV), 347–367 (LFPI…ALYF), 381–401 (GAII…VTLP), 411–431 (IGGA…LPVG), and 453–473 (IFAG…VGFL).

It localises to the cell inner membrane. The enzyme catalyses N-acetyl-beta-D-muramate(out) + N(pros)-phospho-L-histidyl-[protein] = N-acetyl-beta-D-muramate 6-phosphate(in) + L-histidyl-[protein]. In terms of biological role, the phosphoenolpyruvate-dependent sugar phosphotransferase system (sugar PTS), a major carbohydrate active transport system, catalyzes the phosphorylation of incoming sugar substrates concomitantly with their translocation across the cell membrane. This system is involved in N-acetylmuramic acid (MurNAc) transport, yielding cytoplasmic MurNAc-6-P. Is also able to take up anhydro-N-acetylmuramic acid (anhMurNAc), but cannot phosphorylate the carbon 6, probably because of the 1,6-anhydro ring. This Vibrio vulnificus (strain YJ016) protein is PTS system N-acetylmuramic acid-specific EIIBC component (murP).